The following is a 72-amino-acid chain: Brevinin-2GHb (72 aa).

Residues 1 to 22 (MFTMKKSLLLLFFLGTVSLSLC) form the signal peptide. Residues 23–42 (EQERGADEDDGGEMTEELKR) constitute a propeptide that is removed on maturation. The cysteines at positions 66 and 72 are disulfide-linked.

As to expression, expressed by the skin glands.

It is found in the secreted. Functionally, antimicrobial peptide. Active against the Gram-positive bacteria S.aureus FDA209P (MIC=16.5 ug/ml) and B.subtilis ATCC 6633 (MIC&gt;64 ug/ml), and the Gram-negative bacteria E.coli O111 (MIC=8.2 ug/ml) and E.coli ATCC 25922 (MIC=8.2 ug/ml). Not active against the fungus C.albicans. The polypeptide is Brevinin-2GHb (Sylvirana guentheri (Gunther's frog)).